The primary structure comprises 256 residues: Small ribosomal subunit protein uS2 (256 aa).

It belongs to the universal ribosomal protein uS2 family.

This chain is Small ribosomal subunit protein uS2, found in Streptococcus agalactiae serotype III (strain NEM316).